A 275-amino-acid chain; its full sequence is MSQQLQQIIDTAWENRAELSPKAAPADVREAVAHAIEQLDKGALRVAEKIDGNWTVHQWLKKAVLLSFRLEDNAPMPAGGYSQFYDKVPSKFANYTAEDFAAGGFRVVPPAIARRGSFIAKNVVLMPSYTNIGAYVDEGTMVDTWATVGSCAQIGKNVHLSGGVGIGGVLEPLQANPVIIEDNCFIGARSEVVEGVIVEENSVISMGVYLGQSTKIYDRETGEVSYGRIPAGSVVVAGNLPSKDGSHSLYCAVIVKKVDAKTRAKVGLNELLRGD.

The protein belongs to the transferase hexapeptide repeat family.

It is found in the cytoplasm. It carries out the reaction (S)-2,3,4,5-tetrahydrodipicolinate + succinyl-CoA + H2O = (S)-2-succinylamino-6-oxoheptanedioate + CoA. The protein operates within amino-acid biosynthesis; L-lysine biosynthesis via DAP pathway; LL-2,6-diaminopimelate from (S)-tetrahydrodipicolinate (succinylase route): step 1/3. The polypeptide is 2,3,4,5-tetrahydropyridine-2,6-dicarboxylate N-succinyltransferase (Burkholderia ambifaria (strain MC40-6)).